A 290-amino-acid polypeptide reads, in one-letter code: Glycine--tRNA ligase alpha subunit (290 aa).

The protein belongs to the class-II aminoacyl-tRNA synthetase family. Tetramer of two alpha and two beta subunits.

Its subcellular location is the cytoplasm. It carries out the reaction tRNA(Gly) + glycine + ATP = glycyl-tRNA(Gly) + AMP + diphosphate. The polypeptide is Glycine--tRNA ligase alpha subunit (Fusobacterium nucleatum subsp. nucleatum (strain ATCC 25586 / DSM 15643 / BCRC 10681 / CIP 101130 / JCM 8532 / KCTC 2640 / LMG 13131 / VPI 4355)).